The chain runs to 214 residues: MSQFNPMGGQSTTIQSSLVPIVVEQTARGERSYDIYSRLLKERVIFLVGQVEDHMANLVVAQLLFLEAENPDKDIHLYINSPGGSVTAGMSIYDTMQFIKPDVSTMCIGQACSMGSFLLSAGATGKRFCLPNARTMIHQPSGGAQGQASDIHIHAQEILKIRARLNEIMAKHTGKSVEEVARDTERDNFMSAEESKAYGLVDDVLYQRVPEESK.

Residue Ser113 is the Nucleophile of the active site. The active site involves His138.

It belongs to the peptidase S14 family. In terms of assembly, fourteen ClpP subunits assemble into 2 heptameric rings which stack back to back to give a disk-like structure with a central cavity, resembling the structure of eukaryotic proteasomes.

The protein resides in the cytoplasm. It carries out the reaction Hydrolysis of proteins to small peptides in the presence of ATP and magnesium. alpha-casein is the usual test substrate. In the absence of ATP, only oligopeptides shorter than five residues are hydrolyzed (such as succinyl-Leu-Tyr-|-NHMec, and Leu-Tyr-Leu-|-Tyr-Trp, in which cleavage of the -Tyr-|-Leu- and -Tyr-|-Trp bonds also occurs).. In terms of biological role, cleaves peptides in various proteins in a process that requires ATP hydrolysis. Has a chymotrypsin-like activity. Plays a major role in the degradation of misfolded proteins. The protein is ATP-dependent Clp protease proteolytic subunit of Teredinibacter turnerae (strain ATCC 39867 / T7901).